The following is a 523-amino-acid chain: Ribosomal protein uS12 methylthiotransferase RimO (523 aa).

The MTTase N-terminal domain maps to 7-134 (RRVALITLGC…IATHLAAVLA (128 aa)). Residues cysteine 16, cysteine 52, cysteine 97, cysteine 192, cysteine 196, and cysteine 199 each coordinate [4Fe-4S] cluster. The Radical SAM core domain occupies 178–409 (LTAGPVAVLK…DLVEQLTAAR (232 aa)). Positions 411 to 492 (DARIGSRVQV…GVDLIAEFIA (82 aa)) constitute a TRAM domain.

This sequence belongs to the methylthiotransferase family. RimO subfamily. The cofactor is [4Fe-4S] cluster.

Its subcellular location is the cytoplasm. The catalysed reaction is L-aspartate(89)-[ribosomal protein uS12]-hydrogen + (sulfur carrier)-SH + AH2 + 2 S-adenosyl-L-methionine = 3-methylsulfanyl-L-aspartate(89)-[ribosomal protein uS12]-hydrogen + (sulfur carrier)-H + 5'-deoxyadenosine + L-methionine + A + S-adenosyl-L-homocysteine + 2 H(+). In terms of biological role, catalyzes the methylthiolation of an aspartic acid residue of ribosomal protein uS12. This chain is Ribosomal protein uS12 methylthiotransferase RimO, found in Frankia casuarinae (strain DSM 45818 / CECT 9043 / HFP020203 / CcI3).